The primary structure comprises 192 residues: HTH-type transcriptional repressor SCO4008 (192 aa).

The HTH tetR-type domain occupies 7–67 (EATKARIFEA…SVLEKKMLDL (61 aa)). A DNA-binding region (H-T-H motif) is located at residues 30–49 (RIDRIAAEARANKQLIYAYY).

As to quaternary structure, homodimer. Four dimers bind to the two operator sites.

Binding of a wide range of cationic hydrophobic compounds to SCO4008 causes a decrease in DNA-binding, probably via allosteric conformational change of SCO4008. Its function is as follows. Probably regulates the expression of its own gene and the adjacent SCO4007 gene by binding to two operator sites in the SCO4007-SCO4008 intergenic region. This is HTH-type transcriptional repressor SCO4008 from Streptomyces coelicolor (strain ATCC BAA-471 / A3(2) / M145).